The primary structure comprises 314 residues: Ribonuclease Z (314 aa).

Positions 61, 63, 65, 66, 137, 207, and 263 each coordinate Zn(2+). The active-site Proton acceptor is the Asp65.

Belongs to the RNase Z family. Homodimer. Zn(2+) is required as a cofactor.

It catalyses the reaction Endonucleolytic cleavage of RNA, removing extra 3' nucleotides from tRNA precursor, generating 3' termini of tRNAs. A 3'-hydroxy group is left at the tRNA terminus and a 5'-phosphoryl group is left at the trailer molecule.. In terms of biological role, zinc phosphodiesterase, which displays some tRNA 3'-processing endonuclease activity. Probably involved in tRNA maturation, by removing a 3'-trailer from precursor tRNA. This is Ribonuclease Z from Thermococcus kodakarensis (strain ATCC BAA-918 / JCM 12380 / KOD1) (Pyrococcus kodakaraensis (strain KOD1)).